A 125-amino-acid polypeptide reads, in one-letter code: Large ribosomal subunit protein bL12 (125 aa).

Belongs to the bacterial ribosomal protein bL12 family. As to quaternary structure, homodimer. Part of the ribosomal stalk of the 50S ribosomal subunit. Forms a multimeric L10(L12)X complex, where L10 forms an elongated spine to which 2 to 4 L12 dimers bind in a sequential fashion. Binds GTP-bound translation factors.

Functionally, forms part of the ribosomal stalk which helps the ribosome interact with GTP-bound translation factors. Is thus essential for accurate translation. The sequence is that of Large ribosomal subunit protein bL12 from Anaeromyxobacter dehalogenans (strain 2CP-1 / ATCC BAA-258).